The sequence spans 354 residues: Phenylalanine--tRNA ligase alpha subunit (354 aa).

E279 is a binding site for Mg(2+).

Belongs to the class-II aminoacyl-tRNA synthetase family. Phe-tRNA synthetase alpha subunit type 1 subfamily. Tetramer of two alpha and two beta subunits. It depends on Mg(2+) as a cofactor.

It localises to the cytoplasm. It catalyses the reaction tRNA(Phe) + L-phenylalanine + ATP = L-phenylalanyl-tRNA(Phe) + AMP + diphosphate + H(+). The polypeptide is Phenylalanine--tRNA ligase alpha subunit (Cupriavidus pinatubonensis (strain JMP 134 / LMG 1197) (Cupriavidus necator (strain JMP 134))).